Reading from the N-terminus, the 149-residue chain is 3-dehydroquinate dehydratase (149 aa).

Residue tyrosine 26 is the Proton acceptor of the active site. Positions 77, 83, and 90 each coordinate substrate. Histidine 103 (proton donor) is an active-site residue. Residues 104 to 105 (LS) and arginine 114 each bind substrate.

The protein belongs to the type-II 3-dehydroquinase family. As to quaternary structure, homododecamer.

The catalysed reaction is 3-dehydroquinate = 3-dehydroshikimate + H2O. The protein operates within metabolic intermediate biosynthesis; chorismate biosynthesis; chorismate from D-erythrose 4-phosphate and phosphoenolpyruvate: step 3/7. In terms of biological role, catalyzes a trans-dehydration via an enolate intermediate. The sequence is that of 3-dehydroquinate dehydratase from Haemophilus influenzae (strain 86-028NP).